We begin with the raw amino-acid sequence, 268 residues long: uncharacterized protein (268 aa).

The segment at 45 to 64 (SDTQGPAPGINGQGKPSPGA) is disordered.

This is an uncharacterized protein from Aquifex aeolicus (strain VF5).